Consider the following 357-residue polypeptide: Phosphoribosylformylglycinamidine cyclo-ligase (357 aa).

This sequence belongs to the AIR synthase family.

The protein localises to the cytoplasm. The enzyme catalyses 2-formamido-N(1)-(5-O-phospho-beta-D-ribosyl)acetamidine + ATP = 5-amino-1-(5-phospho-beta-D-ribosyl)imidazole + ADP + phosphate + H(+). It functions in the pathway purine metabolism; IMP biosynthesis via de novo pathway; 5-amino-1-(5-phospho-D-ribosyl)imidazole from N(2)-formyl-N(1)-(5-phospho-D-ribosyl)glycinamide: step 2/2. This Rhizobium etli (strain ATCC 51251 / DSM 11541 / JCM 21823 / NBRC 15573 / CFN 42) protein is Phosphoribosylformylglycinamidine cyclo-ligase.